A 218-amino-acid chain; its full sequence is Very-long-chain (3R)-3-hydroxyacyl-CoA dehydratase (218 aa).

Residues 1–6 lie on the Cytoplasmic side of the membrane; the sequence is MKTYLS. The helical transmembrane segment at 7 to 29 threads the bilayer; the sequence is IYYLIQFCGHSWIFTNMTTRFLF. Over 30 to 38 the chain is Lumenal; it reads FGQDAFADT. A helical transmembrane segment spans residues 39 to 61; it reads FYSIGLVMQGCQLLSILELAHIL. Topologically, residues 62 to 67 are cytoplasmic; that stretch reads LGVEQN. Residues 68-87 form a helical membrane-spanning segment; that stretch reads GFLPMFLQVAERFIILFVVI. Over 88–96 the chain is Lumenal; sequence TSQEEVQSK. A helical transmembrane segment spans residues 97-116; the sequence is YIVCALFFIWNLWDVIRYPY. The Cytoplasmic portion of the chain corresponds to 117–136; sequence DMLAAVDTDYSALTWLRHTW. The chain crosses the membrane as a helical span at residues 137 to 159; it reads WIVAYPLSVLAEAYTIYESLPYF. Residues Y141 and E148 contribute to the active site. At 160 to 178 the chain is on the lumenal side; the sequence is ESLGTYSFKMALPVSLSFH. The chain crosses the membrane as a helical span at residues 179–201; that stretch reads FPYILTLYLVLQPVGMLYICSCL. Over 202-218 the chain is Cytoplasmic; it reads WSERKQYFQRKLKLKKN.

It belongs to the very long-chain fatty acids dehydratase HACD family.

Its subcellular location is the endoplasmic reticulum membrane. It catalyses the reaction a very-long-chain (3R)-3-hydroxyacyl-CoA = a very-long-chain (2E)-enoyl-CoA + H2O. The enzyme catalyses (3R)-hydroxyhexadecanoyl-CoA = (2E)-hexadecenoyl-CoA + H2O. It participates in lipid metabolism; fatty acid biosynthesis. Functionally, catalyzes the third of the four reactions of the long-chain fatty acids elongation cycle. This endoplasmic reticulum-bound enzymatic process, allows the addition of two carbons to the chain of long- and very long-chain fatty acids/VLCFAs per cycle. This enzyme catalyzes the dehydration of the 3-hydroxyacyl-CoA intermediate into trans-2,3-enoyl-CoA, within each cycle of fatty acid elongation. Thereby, it participates in the production of VLCFAs of different chain lengths that are involved in multiple biological processes as precursors of membrane lipids and lipid mediators. In Xenopus laevis (African clawed frog), this protein is Very-long-chain (3R)-3-hydroxyacyl-CoA dehydratase.